The primary structure comprises 67 residues: Ceratotoxin-C (67 aa).

The signal sequence occupies residues Met-1–Ala-23. Residues Glu-24–Arg-35 constitute a propeptide that is removed on maturation.

As to quaternary structure, homomer of four to six subunits.

Its subcellular location is the secreted. In terms of biological role, female-specific peptides with potent activity against Gram-positive and Gram-negative bacteria. They have as well hemolytic activity. This Ceratitis capitata (Mediterranean fruit fly) protein is Ceratotoxin-C (CTXC1).